A 781-amino-acid chain; its full sequence is Zinc finger protein klf1 (781 aa).

2 consecutive C2H2-type zinc fingers follow at residues 17 to 41 and 47 to 70; these read YKCD…FRSH and FICP…NQKH.

The protein localises to the nucleus. It localises to the cytoplasm. It is found in the cytoskeleton. Its subcellular location is the spindle. Its function is as follows. Required for maintaining cell viability in nitrogen-deficient stationary phase (G0) cells. This chain is Zinc finger protein klf1 (klf1), found in Schizosaccharomyces pombe (strain 972 / ATCC 24843) (Fission yeast).